We begin with the raw amino-acid sequence, 150 residues long: uncharacterized protein (150 aa).

This is an uncharacterized protein from Saccharomyces cerevisiae (strain ATCC 204508 / S288c) (Baker's yeast).